Consider the following 196-residue polypeptide: ATP-dependent Clp protease proteolytic subunit (196 aa).

Serine 96 functions as the Nucleophile in the catalytic mechanism. Histidine 121 is an active-site residue.

The protein belongs to the peptidase S14 family. In terms of assembly, fourteen ClpP subunits assemble into 2 heptameric rings which stack back to back to give a disk-like structure with a central cavity, resembling the structure of eukaryotic proteasomes.

It is found in the cytoplasm. The catalysed reaction is Hydrolysis of proteins to small peptides in the presence of ATP and magnesium. alpha-casein is the usual test substrate. In the absence of ATP, only oligopeptides shorter than five residues are hydrolyzed (such as succinyl-Leu-Tyr-|-NHMec, and Leu-Tyr-Leu-|-Tyr-Trp, in which cleavage of the -Tyr-|-Leu- and -Tyr-|-Trp bonds also occurs).. Functionally, cleaves peptides in various proteins in a process that requires ATP hydrolysis. Has a chymotrypsin-like activity. Plays a major role in the degradation of misfolded proteins. The chain is ATP-dependent Clp protease proteolytic subunit from Streptococcus pneumoniae (strain 70585).